We begin with the raw amino-acid sequence, 159 residues long: 2-C-methyl-D-erythritol 2,4-cyclodiphosphate synthase (159 aa).

Aspartate 10 and histidine 12 together coordinate a divalent metal cation. 4-CDP-2-C-methyl-D-erythritol 2-phosphate is bound by residues 10–12 and 36–37; these read DVH and HS. Histidine 44 provides a ligand contact to a divalent metal cation. 4-CDP-2-C-methyl-D-erythritol 2-phosphate is bound by residues 58-60, 134-137, phenylalanine 141, and arginine 144; these read DIG and TTTE.

This sequence belongs to the IspF family. Homotrimer. A divalent metal cation serves as cofactor.

The catalysed reaction is 4-CDP-2-C-methyl-D-erythritol 2-phosphate = 2-C-methyl-D-erythritol 2,4-cyclic diphosphate + CMP. It participates in isoprenoid biosynthesis; isopentenyl diphosphate biosynthesis via DXP pathway; isopentenyl diphosphate from 1-deoxy-D-xylulose 5-phosphate: step 4/6. Involved in the biosynthesis of isopentenyl diphosphate (IPP) and dimethylallyl diphosphate (DMAPP), two major building blocks of isoprenoid compounds. Catalyzes the conversion of 4-diphosphocytidyl-2-C-methyl-D-erythritol 2-phosphate (CDP-ME2P) to 2-C-methyl-D-erythritol 2,4-cyclodiphosphate (ME-CPP) with a corresponding release of cytidine 5-monophosphate (CMP). This Bacteroides fragilis (strain ATCC 25285 / DSM 2151 / CCUG 4856 / JCM 11019 / LMG 10263 / NCTC 9343 / Onslow / VPI 2553 / EN-2) protein is 2-C-methyl-D-erythritol 2,4-cyclodiphosphate synthase.